Here is a 465-residue protein sequence, read N- to C-terminus: 3-isopropylmalate dehydratase large subunit (465 aa).

[4Fe-4S] cluster-binding residues include Cys-347, Cys-407, and Cys-410. Positions 416-443 (DTLRPGERSASTSNRNFEGRQGPGGRTH) are disordered.

This sequence belongs to the aconitase/IPM isomerase family. LeuC type 1 subfamily. As to quaternary structure, heterodimer of LeuC and LeuD. Requires [4Fe-4S] cluster as cofactor.

The catalysed reaction is (2R,3S)-3-isopropylmalate = (2S)-2-isopropylmalate. It participates in amino-acid biosynthesis; L-leucine biosynthesis; L-leucine from 3-methyl-2-oxobutanoate: step 2/4. Its function is as follows. Catalyzes the isomerization between 2-isopropylmalate and 3-isopropylmalate, via the formation of 2-isopropylmaleate. The sequence is that of 3-isopropylmalate dehydratase large subunit from Frankia casuarinae (strain DSM 45818 / CECT 9043 / HFP020203 / CcI3).